Here is a 759-residue protein sequence, read N- to C-terminus: Glycerol-3-phosphate O-acyltransferase 1 (759 aa).

Residues 1-48 (MPAPKLTEKFASSKSTQKTTNYSSIEAKSVKTSADQAYIYQEPSATKK) lie on the Lumenal side of the membrane. A helical membrane pass occupies residues 49-69 (ILYSIATWLLYNIFHCFFREI). The Cytoplasmic segment spans residues 70–434 (RGRGSFKVPQ…AKVNFAKNLG (365 aa)). Residues 414-419 (HYNLPD) carry the HXXXXD motif motif. Residues 435–449 (LVFFRSIGLCILFSL) traverse the membrane as a helical segment. Alanine 450 is a topological domain (lumenal). Residues 451 to 465 (MPGIIMFSPVFILAK) traverse the membrane as a helical segment. The Cytoplasmic segment spans residues 466–493 (RISQEKARTALSKSTVKIKANDVIATWK). A helical transmembrane segment spans residues 494–514 (ILIGMGFAPLLYIFWSVLITY). Residues 515–523 (YLRHKPWNK) lie on the Lumenal side of the membrane. The chain crosses the membrane as a helical span at residues 524-544 (IYVFSGSYISCVIVTYSALIV). At 545–759 (GDIGMDGFKS…EEEEGKEGDA (215 aa)) the chain is on the cytoplasmic side. 3 disordered regions span residues 613–667 (EEDR…SLVN), 684–705 (RKSE…EFEV), and 729–759 (IGEN…EGDA). Basic and acidic residues predominate over residues 647–659 (RDNHDAYEHHNQD). The segment covering 688-702 (SSLASTSVAPSSSSE) has biased composition (low complexity). The span at 736–759 (EEEEEEEEEEEEEEEEEEGKEGDA) shows a compositional bias: acidic residues.

Belongs to the GPAT/DAPAT family.

The protein localises to the endoplasmic reticulum membrane. It carries out the reaction sn-glycerol 3-phosphate + an acyl-CoA = a 1-acyl-sn-glycero-3-phosphate + CoA. The catalysed reaction is dihydroxyacetone phosphate + an acyl-CoA = a 1-acylglycerone 3-phosphate + CoA. The enzyme catalyses sn-glycerol 3-phosphate + hexadecanoyl-CoA = 1-hexadecanoyl-sn-glycero-3-phosphate + CoA. It catalyses the reaction (9Z)-hexadecenoyl-CoA + sn-glycerol 3-phosphate = 1-(9Z-hexadecenoyl)-sn-glycero-3-phosphate + CoA. It carries out the reaction sn-glycerol 3-phosphate + octadecanoyl-CoA = 1-octadecanoyl-sn-glycero-3-phosphate + CoA. The catalysed reaction is sn-glycerol 3-phosphate + (9Z)-octadecenoyl-CoA = 1-(9Z-octadecenoyl)-sn-glycero-3-phosphate + CoA. It functions in the pathway phospholipid metabolism; CDP-diacylglycerol biosynthesis; CDP-diacylglycerol from sn-glycerol 3-phosphate: step 1/3. Its function is as follows. Dual substrate-specific glycerol-3-phosphate/dihydroxyacetone phosphate sn-1 acyltransferase, catalyzing the first and committed reaction in the de novo synthesis of glycerophospholipids and triacylglycerols (TAGs). Prefers Gly-3-P over dihydroxyacetone phosphate and has a marked preference for 16-carbon fatty acyl chains. Transfers a fatty acid from fatty acyl-CoA to the sn-1 position of glycerol-3-phosphate to produce lysophosphatidic acid (LysoPA). These lipids not only are precursors of glycerolipids, but also are dynamic components of signal transduction systems that control cell physiology. SCT1 is the primary supplier of diacylglycerols (DAG), used mainly in TAG synthesis and phosphatidylcholine (PC) synthesis through the CDP-choline pathway. Regulates fatty acid desaturation, that is, the ratio of unsaturated versus saturated fatty acyl chains, by competing with the desaturase OLE1 for the common substrate C16:0-CoA. Sequesters C16:0-CoA into lipids, thereby shielding it from desaturation by OLE1. In Saccharomyces cerevisiae (strain ATCC 204508 / S288c) (Baker's yeast), this protein is Glycerol-3-phosphate O-acyltransferase 1.